A 614-amino-acid polypeptide reads, in one-letter code: Adenylate kinase 7 (614 aa).

The segment at 258–503 is adenylate kinase; sequence PIKICILGPP…KEIGKPRNYG (246 aa). 268-273 contacts ATP; it reads AVGKSS. The segment at 288–346 is NMP; that stretch reads KMKDVIAEAIAKLEAIVAPKDSVEGEEEGEEEEEEENVDDAQELLDGIKESMEQNAGRL. The tract at residues 308-327 is disordered; it reads DSVEGEEEGEEEEEEENVDD. The segment covering 311 to 327 has biased composition (acidic residues); sequence EGEEEGEEEEEEENVDD. AMP is bound by residues 323 to 346, 373 to 376, and Gln380; these read ENVD…AGRL and GFPK. A coiled-coil region spans residues 376–568; the sequence is KTYDQAKDLF…EERELLEVQS (193 aa). An LID region spans residues 428–438; that stretch reads NLPESVVAGTH. Arg446 provides a ligand contact to AMP. Gly478 serves as a coordination point for ATP. The segment at 570-614 is DPY-30; the sequence is PLRNYLMTYVMPTLMQGLNECCKVRPEDPVDFLAEYLFKNNPEMQ.

The protein in the central section; belongs to the adenylate kinase family. It in the C-terminal section; belongs to the dpy-30 family.

It localises to the cytoplasm. It is found in the cytosol. The protein localises to the cell projection. Its subcellular location is the cilium. The protein resides in the flagellum. The catalysed reaction is AMP + ATP = 2 ADP. It carries out the reaction a 2'-deoxyribonucleoside 5'-diphosphate + ATP = a 2'-deoxyribonucleoside 5'-triphosphate + ADP. It catalyses the reaction a ribonucleoside 5'-diphosphate + ATP = a ribonucleoside 5'-triphosphate + ADP. Nucleoside monophosphate (NMP) kinase that catalyzes the reversible transfer of the terminal phosphate group between nucleoside triphosphates and monophosphates. Has highest activity toward AMP, and weaker activity toward dAMP, CMP and dCMP. Also displays broad nucleoside diphosphate kinase activity. Involved in maintaining ciliary structure and function. This chain is Adenylate kinase 7 (Ak7), found in Mus musculus (Mouse).